We begin with the raw amino-acid sequence, 267 residues long: Coiled-coil domain-containing protein 90B, mitochondrial (267 aa).

The transit peptide at 1 to 47 (MKGSQLYRHLSLQGNRLHLHLFQGKKLQLHPSQGHKGTAHRTWKKGF) directs the protein to the mitochondrion. The stretch at 142–175 (LEKSEFATLRAENEKMKIELEHVRQHLLNETNRI) forms a coiled coil. A helical membrane pass occupies residues 244–266 (TVRYMAASVFTCLAIALGFYRLW).

The protein belongs to the CCDC90 family.

It localises to the mitochondrion membrane. The chain is Coiled-coil domain-containing protein 90B, mitochondrial (ccdc90b) from Xenopus tropicalis (Western clawed frog).